An 88-amino-acid chain; its full sequence is ATP synthase epsilon chain (88 aa).

It belongs to the ATPase epsilon chain family. In terms of assembly, F-type ATPases have 2 components, CF(1) - the catalytic core - and CF(0) - the membrane proton channel. CF(1) has five subunits: alpha(3), beta(3), gamma(1), delta(1), epsilon(1). CF(0) has three main subunits: a, b and c.

It localises to the cell inner membrane. In terms of biological role, produces ATP from ADP in the presence of a proton gradient across the membrane. The sequence is that of ATP synthase epsilon chain (atpC) from Chlorobium limicola.